The following is a 307-amino-acid chain: Mediator of RNA polymerase II transcription subunit 18 (307 aa).

Over residues Thr117–Gln126 the composition is skewed to polar residues. Residues Thr117–Ser162 form a disordered region.

The protein belongs to the Mediator complex subunit 18 family. As to quaternary structure, component of the Mediator complex, which is composed of at least 21 subunits that form three structurally distinct submodules. The Mediator head module contains MED6, MED8, MED11, SRB4/MED17, SRB5/MED18, ROX3/MED19, SRB2/MED20 and SRB6/MED22, the middle module contains MED1, MED4, NUT1/MED5, MED7, CSE2/MED9, NUT2/MED10, SRB7/MED21 and SOH1/MED31, and the tail module contains MED2, PGD1/MED3, RGR1/MED14, GAL11/MED15 and SIN4/MED16. The head and the middle modules interact directly with RNA polymerase II, whereas the elongated tail module interacts with gene-specific regulatory proteins. SRB5/MED18 interacts directly with MED8 and SRB2/MED20.

The protein resides in the nucleus. In terms of biological role, component of the Mediator complex, a coactivator involved in the regulated transcription of nearly all RNA polymerase II-dependent genes. Mediator functions as a bridge to convey information from gene-specific regulatory proteins to the basal RNA polymerase II transcription machinery. The Mediator complex, having a compact conformation in its free form, is recruited to promoters by direct interactions with regulatory proteins and serves for the assembly of a functional preinitiation complex with RNA polymerase II and the general transcription factors. The Mediator complex unfolds to an extended conformation and partially surrounds RNA polymerase II, specifically interacting with the unphosphorylated form of the C-terminal domain (CTD) of RNA polymerase II. The Mediator complex dissociates from the RNA polymerase II holoenzyme and stays at the promoter when transcriptional elongation begins. This chain is Mediator of RNA polymerase II transcription subunit 18 (SRB5), found in Saccharomyces cerevisiae (strain ATCC 204508 / S288c) (Baker's yeast).